A 166-amino-acid chain; its full sequence is Interferon gamma (166 aa).

The signal sequence occupies residues 1–23 (MKYTSYILAFQLCIVLGSLGCYC). Pyrrolidone carboxylic acid is present on Q24. 3 N-linked (GlcNAc...) asparagine glycosylation sites follow: N48, N86, and N120.

The protein belongs to the type II (or gamma) interferon family. As to quaternary structure, homodimer. Interacts with IFNGR1 (via extracellular domain); this interaction promotes IFNGR1 dimerization. As to expression, released primarily from activated T lymphocytes.

It localises to the secreted. Functionally, type II interferon produced by immune cells such as T-cells and NK cells that plays crucial roles in antimicrobial, antiviral, and antitumor responses by activating effector immune cells and enhancing antigen presentation. Primarily signals through the JAK-STAT pathway after interaction with its receptor IFNGR1 to affect gene regulation. Upon IFNG binding, IFNGR1 intracellular domain opens out to allow association of downstream signaling components JAK2, JAK1 and STAT1, leading to STAT1 activation, nuclear translocation and transcription of IFNG-regulated genes. Many of the induced genes are transcription factors such as IRF1 that are able to further drive regulation of a next wave of transcription. Plays a role in class I antigen presentation pathway by inducing a replacement of catalytic proteasome subunits with immunoproteasome subunits. In turn, increases the quantity, quality, and repertoire of peptides for class I MHC loading. Increases the efficiency of peptide generation also by inducing the expression of activator PA28 that associates with the proteasome and alters its proteolytic cleavage preference. Up-regulates as well MHC II complexes on the cell surface by promoting expression of several key molecules such as cathepsins B/CTSB, H/CTSH, and L/CTSL. Participates in the regulation of hematopoietic stem cells during development and under homeostatic conditions by affecting their development, quiescence, and differentiation. This Saimiri sciureus (Common squirrel monkey) protein is Interferon gamma (IFNG).